Here is an 81-residue protein sequence, read N- to C-terminus: Sulfur carrier protein TusA (81 aa).

The active-site Cysteine persulfide intermediate is C19.

It belongs to the sulfur carrier protein TusA family. Interacts with IscS.

The protein localises to the cytoplasm. It participates in tRNA modification. In terms of biological role, sulfur carrier protein involved in sulfur trafficking in the cell. Part of a sulfur-relay system required for 2-thiolation during synthesis of 2-thiouridine of the modified wobble base 5-methylaminomethyl-2-thiouridine (mnm(5)s(2)U) in tRNA. Interacts with IscS and stimulates its cysteine desulfurase activity. Accepts an activated sulfur from IscS, which is then transferred to TusD, and thus determines the direction of sulfur flow from IscS to 2-thiouridine formation. Also appears to be involved in sulfur transfer for the biosynthesis of molybdopterin. The sequence is that of Sulfur carrier protein TusA from Salmonella choleraesuis (strain SC-B67).